A 260-amino-acid chain; its full sequence is MMIIISPAKTLDFSKFNETLPMTKPYFLNEARELVEELKKYDNFSLEKLMKISPKLAKLNTQRFQNWSESLESARQCLVAFKGEVFKGIDVGSYTMEDYFYANDNLRILSGLYGVLKPFDGINLYRLEMATRLGIGGFKNLYDYWGNKLIDNIMKDIERRENKAIVNLASYEYFKAIEDIKTIGDIRVITPIFKEYRDGEYKIITIMAKRARGLMTSFIIRNKIEDLEELKEFNHDGYEFNEELSNEADLVFTRDIHNRN.

This sequence belongs to the UPF0246 family.

The sequence is that of UPF0246 protein Cbei_1739 from Clostridium beijerinckii (strain ATCC 51743 / NCIMB 8052) (Clostridium acetobutylicum).